The primary structure comprises 149 residues: Pleckstrin homology domain-containing family J member 1 (149 aa).

A PH domain is found at 15 to 108; that stretch reads RAEKAAELGM…WVEALTNASY (94 aa).

In Xenopus laevis (African clawed frog), this protein is Pleckstrin homology domain-containing family J member 1 (plekhj1).